The following is a 70-amino-acid chain: Probable U6 snRNA-associated Sm-like protein (70 aa).

A Sm domain is found at 3–70; the sequence is DPFCFLKMYL…ILFVGPRLLL (68 aa).

It belongs to the snRNP Sm proteins family.

It localises to the nucleus. In terms of biological role, binds specifically to the 3'-terminal U-tract of U6 snRNA. The protein is Probable U6 snRNA-associated Sm-like protein of Encephalitozoon cuniculi (strain GB-M1) (Microsporidian parasite).